A 1208-amino-acid polypeptide reads, in one-letter code: E3 ubiquitin-protein ligase DZIP3 (1208 aa).

A compositionally biased stretch (basic and acidic residues) spans 10–29 (VRHPAVEDQRKEETENKLEK). Disordered regions lie at residues 10 to 38 (VRHP…NKQE) and 637 to 698 (GTSI…PHSV). 4 coiled-coil regions span residues 14-43 (AVED…DIPT), 647-676 (ESLK…SKED), 792-853 (IASL…SKLN), and 904-939 (QLKA…KVKQ). Residues 637-647 (GTSIPSESSTE) are compositionally biased toward polar residues. The segment covering 648–657 (SLKDLQEVKS) has biased composition (basic and acidic residues). A compositionally biased stretch (basic residues) spans 658 to 669 (KQRKKKKTKNKK). A compositionally biased stretch (basic and acidic residues) spans 670–693 (NKDSKEDQVPYVVEKEEQLRKEQA). The tract at residues 1088-1145 (KSQSQGKSVSNVNCVSPSHSPSQPDAAQPPKPAWRPLTSQGPATWEGASNPDEEEEEE) is disordered. Polar residues predominate over residues 1089 to 1112 (SQSQGKSVSNVNCVSPSHSPSQPD). Residues 1148–1188 (CVICHENLSPENLSVLPCAHKFHAQCIRPWLMQQGTCPTCR) form an RING-type; atypical zinc finger.

In terms of assembly, interacts with DAZ proteins. As to expression, widely expressed at low level. Highly expressed in skeletal muscle, kidney and heart. Expressed at low level in placenta, lung, brain, liver and pancreas.

The protein resides in the cytoplasm. It carries out the reaction S-ubiquitinyl-[E2 ubiquitin-conjugating enzyme]-L-cysteine + [acceptor protein]-L-lysine = [E2 ubiquitin-conjugating enzyme]-L-cysteine + N(6)-ubiquitinyl-[acceptor protein]-L-lysine.. It functions in the pathway protein modification; protein ubiquitination. E3 Ubiquitin ligase proteins mediate ubiquitination and subsequent proteasomal degradation of target proteins. E3 ubiquitin ligases accept ubiquitin from an E2 ubiquitin-conjugating enzyme in the form of a thioester and then directly transfers the ubiquitin to targeted substrates. Able to specifically bind RNA. The chain is E3 ubiquitin-protein ligase DZIP3 (DZIP3) from Homo sapiens (Human).